A 401-amino-acid chain; its full sequence is NADH-quinone oxidoreductase subunit D 2 (401 aa).

The protein belongs to the complex I 49 kDa subunit family. In terms of assembly, NDH-1 is composed of 14 different subunits. Subunits NuoB, C, D, E, F, and G constitute the peripheral sector of the complex.

It localises to the cell inner membrane. The catalysed reaction is a quinone + NADH + 5 H(+)(in) = a quinol + NAD(+) + 4 H(+)(out). In terms of biological role, NDH-1 shuttles electrons from NADH, via FMN and iron-sulfur (Fe-S) centers, to quinones in the respiratory chain. The immediate electron acceptor for the enzyme in this species is believed to be ubiquinone. Couples the redox reaction to proton translocation (for every two electrons transferred, four hydrogen ions are translocated across the cytoplasmic membrane), and thus conserves the redox energy in a proton gradient. The sequence is that of NADH-quinone oxidoreductase subunit D 2 from Thermodesulfovibrio yellowstonii (strain ATCC 51303 / DSM 11347 / YP87).